The sequence spans 319 residues: 3'-5' exoribonuclease YhaM (319 aa).

The OB DNA-binding region spans 12–90 (EAVDGYLLIK…QLKIASIRPT (79 aa)). The 117-residue stretch at 163 to 279 (HVVSMLRIGK…LHLIDNIDAK (117 aa)) folds into the HD domain.

The protein belongs to the YhaM family.

Shows a 3'-5' exoribonuclease activity. The chain is 3'-5' exoribonuclease YhaM from Shouchella clausii (strain KSM-K16) (Alkalihalobacillus clausii).